The sequence spans 345 residues: MRVLGIESSCDETGVAIYDTEQGLLGQALYSQVEMHARYGGVVPELASRDHVQRVLPLIREVMTEANTQPQQLDGVAFTAGPGLAGALLVGAGVARSLAFGWNLPAVAVHHMEGHLLAPLLEPNAPAFPFVALLVSGGHTLLLDAKALGEYEILGESVDDAAGEAFDKAAKMMGLGYPGGPRVATLAQQGTAGRFRFPRPMTDRPGLDMSFSGLKTFTLNTINDLGGKEALSEQDRADIARAFEEAAVDTLVIKCRRAVEQTGHKRLVMAGGVSANQSLRAKLAEQMKKRGVDVYYPAPQYCTDNGAMIAFAGALRLQAGERAELPIKIRPRWPLTELAKLQGAD.

Fe cation is bound by residues His111 and His115. Residues 134 to 138, Asp167, Gly180, and Asn276 each bind substrate; that span reads LVSGG. Residue Asp304 coordinates Fe cation.

The protein belongs to the KAE1 / TsaD family. The cofactor is Fe(2+).

The protein localises to the cytoplasm. It carries out the reaction L-threonylcarbamoyladenylate + adenosine(37) in tRNA = N(6)-L-threonylcarbamoyladenosine(37) in tRNA + AMP + H(+). Required for the formation of a threonylcarbamoyl group on adenosine at position 37 (t(6)A37) in tRNAs that read codons beginning with adenine. Is involved in the transfer of the threonylcarbamoyl moiety of threonylcarbamoyl-AMP (TC-AMP) to the N6 group of A37, together with TsaE and TsaB. TsaD likely plays a direct catalytic role in this reaction. The protein is tRNA N6-adenosine threonylcarbamoyltransferase of Alcanivorax borkumensis (strain ATCC 700651 / DSM 11573 / NCIMB 13689 / SK2).